A 351-amino-acid polypeptide reads, in one-letter code: Columbamine O-methyltransferase (351 aa).

Residues glycine 198, aspartate 221, aspartate 241, methionine 242, and lysine 255 each contribute to the S-adenosyl-L-methionine site. The Proton acceptor role is filled by histidine 259.

Belongs to the class I-like SAM-binding methyltransferase superfamily. Cation-independent O-methyltransferase family. COMT subfamily. As to quaternary structure, homodimer.

The enzyme catalyses columbamine + S-adenosyl-L-methionine = palmatine + S-adenosyl-L-homocysteine + H(+). It carries out the reaction (S)-tetrahydrocolumbamine + S-adenosyl-L-methionine = (S)-tetrahydropalmatine + S-adenosyl-L-homocysteine + H(+). It participates in alkaloid biosynthesis; palmatine biosynthesis; palmatine from columbamine: step 1/1. In terms of biological role, catalyzes the conversion of tetrahydrocolumbamine to (S)-tetrahydropalmatine and of columbamine to palmatine, an isoquinoline alkaloid. This chain is Columbamine O-methyltransferase, found in Coptis japonica (Japanese goldthread).